A 461-amino-acid polypeptide reads, in one-letter code: Argininosuccinate lyase (461 aa).

Belongs to the lyase 1 family. Argininosuccinate lyase subfamily.

Its subcellular location is the cytoplasm. The enzyme catalyses 2-(N(omega)-L-arginino)succinate = fumarate + L-arginine. It participates in amino-acid biosynthesis; L-arginine biosynthesis; L-arginine from L-ornithine and carbamoyl phosphate: step 3/3. This chain is Argininosuccinate lyase, found in Dehalococcoides mccartyi (strain ATCC BAA-2100 / JCM 16839 / KCTC 5957 / BAV1).